Here is a 469-residue protein sequence, read N- to C-terminus: Dihydrolipoyl dehydrogenase (469 aa).

Residues 34–42 (EKQYWGGVC), Lys-51, and Gly-114 contribute to the FAD site. Cys-42 and Cys-47 are oxidised to a cystine. NAD(+) is bound by residues 179-183 (GAGAI), Glu-202, and 269-272 (SVGF). FAD contacts are provided by Asp-312 and Ala-320. The active-site Proton acceptor is the His-448.

This sequence belongs to the class-I pyridine nucleotide-disulfide oxidoreductase family. In terms of assembly, homodimer. Part of an unusual ODH/PDH supercomplex, consisting of AceE (E1), AceF (E2), and Lpd (E3) together with OdhA (E1+E2). FAD is required as a cofactor.

It is found in the cytoplasm. It catalyses the reaction N(6)-[(R)-dihydrolipoyl]-L-lysyl-[protein] + NAD(+) = N(6)-[(R)-lipoyl]-L-lysyl-[protein] + NADH + H(+). It functions in the pathway carbohydrate metabolism; tricarboxylic acid cycle; succinyl-CoA from 2-oxoglutarate (dehydrogenase route): step 1/1. In terms of biological role, lipoamide dehydrogenase is an essential component of the pyruvate dehydrogenase (PDH) and 2-oxoglutarate dehydrogenase (ODH) complexes. Catalyzes the reoxidation of dihydrolipoyl groups which are covalently attached to the lipoate acyltransferase components (E2) of the complexes. Also catalyzes a reversible NADH:NAD(+) transhydrogenation, and is able to transfer electrons from NADH to various redox-active compounds and quinones. May be involved in quinone redox cycling in C.glutamicum. This chain is Dihydrolipoyl dehydrogenase (lpd), found in Corynebacterium glutamicum (strain ATCC 13032 / DSM 20300 / JCM 1318 / BCRC 11384 / CCUG 27702 / LMG 3730 / NBRC 12168 / NCIMB 10025 / NRRL B-2784 / 534).